The sequence spans 876 residues: MEMKPKYNPTEVEAGRYQEWVEKGYFRPSGDKSKETYTIVIPPPNVTGKLHLGHAWDTTLQDILTRMKRMQGYDTLYLPGMDHAGIATQAKVEAKLNEQGISRHDIGREKFLEEVWSWKDEYASFIRQQWAKLGLGLDYDRERFTLDEGLSKAVRKVFVDMYNKGLIYRGERIINWDPEARTALSDIEVVHEDVEGKFYHFKYPYADGEGYIEIATTRPETMLGDTAIVVNPDDERYKDVIGKKVILPIVNRELPILADEYVDVEFGSGAMKVTPAHDPNDFEIGQRHNLESIIVMDEEGKMNDKAGKYEGMDRFECRAQLVEDLKEQDLVIKIEDHVHAVGHSERTGAVVEPYLSTQWFVNMEPLAKQALDNQKTDNRINFVPERFEHTFNQWMENIRDWTISRQLWWGHQIPAWYHKETGEIYVGETEPEDAENWVQDEDVLDTWFSSGLWPFSTLGWPDVESEDYQRYYPTNALVTGYDIIFFWVARMIFQGLEFTGERPFDDVLLHGLVRAEDGRKMSKSLGNGVDPMDVINEYGADSLRYFLATGSSPGHDLRYSTEKVESVWNFINKIWNAARFSIMNIGEEFKFEDIDLSKNLSLADKWILTRLNETIKTVTDLSDRYEFGEVGRALYNFIWDEFCDWYIEMSKIPMNGEDEAQKQVTRSVLSYVLERTMRMLHPYMPFVTEEIWQNLPHVGETIVTSAWPEVEEAYMFEESKQAMQYVVEIIKAVRQARSEVNTPLSKAIPIYIKTKDAEIKQMLDENQHYLERFGHPSELVISTDIETPDKAMTSVVGAGEVILPLEGLIDMDKEIARLEKEIDKWQSELDRVDKKLSNENFVNKAPEKIINEEKAKKHDYQEKFDSVKARIEQLKA.

Residues 44–54 (PNVTGKLHLGH) carry the 'HIGH' region motif. The 'KMSKS' region signature appears at 520–524 (KMSKS). K523 lines the ATP pocket. Positions 805 to 876 (LEGLIDMDKE…VKARIEQLKA (72 aa)) form a coiled coil.

It belongs to the class-I aminoacyl-tRNA synthetase family. ValS type 1 subfamily. In terms of assembly, monomer.

The protein resides in the cytoplasm. The catalysed reaction is tRNA(Val) + L-valine + ATP = L-valyl-tRNA(Val) + AMP + diphosphate. Functionally, catalyzes the attachment of valine to tRNA(Val). As ValRS can inadvertently accommodate and process structurally similar amino acids such as threonine, to avoid such errors, it has a 'posttransfer' editing activity that hydrolyzes mischarged Thr-tRNA(Val) in a tRNA-dependent manner. The chain is Valine--tRNA ligase from Staphylococcus carnosus (strain TM300).